A 520-amino-acid chain; its full sequence is GMP synthase [glutamine-hydrolyzing] (520 aa).

The 195-residue stretch at 8–202 (RLLIIDFGSQ…FVRLAGFTGD (195 aa)) folds into the Glutamine amidotransferase type-1 domain. The active-site Nucleophile is the Cys86. Active-site residues include His177 and Glu179. The GMPS ATP-PPase domain occupies 203 to 395 (WTMDAYREQA…LGLPASFIGR (193 aa)). 230–236 (SGGVDSS) serves as a coordination point for ATP.

As to quaternary structure, homodimer.

It carries out the reaction XMP + L-glutamine + ATP + H2O = GMP + L-glutamate + AMP + diphosphate + 2 H(+). It functions in the pathway purine metabolism; GMP biosynthesis; GMP from XMP (L-Gln route): step 1/1. Its function is as follows. Catalyzes the synthesis of GMP from XMP. The protein is GMP synthase [glutamine-hydrolyzing] of Dinoroseobacter shibae (strain DSM 16493 / NCIMB 14021 / DFL 12).